The chain runs to 2311 residues: C2 domain-containing protein 3 (2311 aa).

2 disordered regions span residues 447–511 (SDSS…TSRC) and 543–562 (GTAV…RPVR). Residues 470-509 (IALDRGRHRDNSPSEYKEDAKQTKGNDSLRDSKTSEKSTS) are compositionally biased toward basic and acidic residues. 6 C2 domains span residues 508 to 666 (TSRC…SVTC), 751 to 888 (GNGG…TRLL), 952 to 1112 (LDPP…HRED), 1136 to 1303 (PSGL…SGWY), 1370 to 1505 (HKRE…TLAV), and 1581 to 1713 (KTEV…CGWY). Residues 939-964 (GTSQTAMPRPAHFLDPPLSSSQMGRP) form a disordered region. Disordered stretches follow at residues 1536-1589 (PSNS…LLDA), 1955-1977 (SEAY…GSLN), 2036-2065 (MTDR…PVNP), 2084-2233 (NDPS…SNLL), and 2261-2292 (VREG…PKEE). Composition is skewed to basic and acidic residues over residues 1565-1589 (FEEK…LLDA) and 1955-1964 (SEAYEREGQR). Positions 2036 to 2047 (MTDRTSPWSSIL) are enriched in polar residues. A compositionally biased stretch (basic and acidic residues) spans 2048–2059 (SERDSDSMDHPQ). Over residues 2084-2095 (NDPSSVLSSARS) the composition is skewed to polar residues. Positions 2138–2151 (AESEAESQEMDGDP) are enriched in acidic residues. Positions 2221 to 2233 (GSESPQVPPSNLL) are enriched in polar residues.

Its subcellular location is the cytoplasm. It localises to the cytoskeleton. The protein localises to the cilium basal body. The protein resides in the microtubule organizing center. It is found in the centrosome. Its subcellular location is the centriole. Functionally, component of the centrioles that acts as a positive regulator of centriole elongation. Promotes assembly of centriolar distal appendage, a structure at the distal end of the mother centriole that acts as an anchor of the cilium. Required for primary cilium formation. The sequence is that of C2 domain-containing protein 3 (c2cd3) from Xenopus tropicalis (Western clawed frog).